The following is a 132-amino-acid chain: Small ribosomal subunit protein uS8 (132 aa).

It belongs to the universal ribosomal protein uS8 family. As to quaternary structure, part of the 30S ribosomal subunit. Contacts proteins S5 and S12.

Functionally, one of the primary rRNA binding proteins, it binds directly to 16S rRNA central domain where it helps coordinate assembly of the platform of the 30S subunit. This is Small ribosomal subunit protein uS8 from Lactococcus lactis subsp. lactis (strain IL1403) (Streptococcus lactis).